Reading from the N-terminus, the 141-residue chain is Hemoglobin subunit beta-C (141 aa).

The 141-residue stretch at 1-141 folds into the Globin domain; the sequence is PNKALITGFW…VASALAHRYH (141 aa). The heme b site is built by H58 and H87.

It belongs to the globin family. In terms of assembly, heterotetramer of two alpha chains and two beta chains. As to expression, red blood cells.

In terms of biological role, involved in oxygen transport from the lung to the various peripheral tissues. The chain is Hemoglobin subunit beta-C from Ammotragus lervia (Barbary sheep).